Reading from the N-terminus, the 356-residue chain is Putative transposase y4zB (356 aa).

Residues 1–19 are compositionally biased toward low complexity; that stretch reads MITTGTPTTRRSAAGTAGA. Disordered stretches follow at residues 1-54 and 334-356; these read MITT…PLAD and PPPVNPSHRRPRCSPHQMSFAYV.

The protein belongs to the transposase 11 family.

This Sinorhizobium fredii (strain NBRC 101917 / NGR234) protein is Putative transposase y4zB.